The sequence spans 427 residues: Aspartate aminotransferase, mitochondrial (427 aa).

A mitochondrion-targeting transit peptide spans 1 to 26 (MALLKSRLLVGVARCQPCLAAVQGRA). 3 residues coordinate substrate: Gly-62, Trp-159, and Asn-212. Position 276 is an N6-(pyridoxal phosphate)lysine (Lys-276). Arg-404 lines the substrate pocket.

It belongs to the class-I pyridoxal-phosphate-dependent aminotransferase family. As to quaternary structure, homodimer. Requires pyridoxal 5'-phosphate as cofactor.

The protein resides in the mitochondrion matrix. The catalysed reaction is L-aspartate + 2-oxoglutarate = oxaloacetate + L-glutamate. It catalyses the reaction L-kynurenine + 2-oxoglutarate = kynurenate + L-glutamate + H2O. Functionally, catalyzes the irreversible transamination of the L-tryptophan metabolite L-kynurenine to form kynurenic acid (KA). As a member of the malate-aspartate shuttle, it has a key role in the intracellular NAD(H) redox balance. Is important for metabolite exchange between mitochondria and cytosol, and for amino acid metabolism. The polypeptide is Aspartate aminotransferase, mitochondrial (got2) (Xenopus tropicalis (Western clawed frog)).